A 484-amino-acid chain; its full sequence is tRNA sulfurtransferase (484 aa).

One can recognise a THUMP domain in the interval 63 to 167 (QAFGERLACI…GDKLYMVTKR (105 aa)). Residues 185 to 186 (LI), lysine 267, glycine 289, and glutamine 298 contribute to the ATP site. A disulfide bridge links cysteine 346 with cysteine 458. Residues 406 to 484 (IDTNEVVIDI…GYHNVKVYRP (79 aa)) enclose the Rhodanese domain. The Cysteine persulfide intermediate role is filled by cysteine 458.

The protein belongs to the ThiI family.

The protein resides in the cytoplasm. The enzyme catalyses [ThiI sulfur-carrier protein]-S-sulfanyl-L-cysteine + a uridine in tRNA + 2 reduced [2Fe-2S]-[ferredoxin] + ATP + H(+) = [ThiI sulfur-carrier protein]-L-cysteine + a 4-thiouridine in tRNA + 2 oxidized [2Fe-2S]-[ferredoxin] + AMP + diphosphate. It carries out the reaction [ThiS sulfur-carrier protein]-C-terminal Gly-Gly-AMP + S-sulfanyl-L-cysteinyl-[cysteine desulfurase] + AH2 = [ThiS sulfur-carrier protein]-C-terminal-Gly-aminoethanethioate + L-cysteinyl-[cysteine desulfurase] + A + AMP + 2 H(+). It participates in cofactor biosynthesis; thiamine diphosphate biosynthesis. Its function is as follows. Catalyzes the ATP-dependent transfer of a sulfur to tRNA to produce 4-thiouridine in position 8 of tRNAs, which functions as a near-UV photosensor. Also catalyzes the transfer of sulfur to the sulfur carrier protein ThiS, forming ThiS-thiocarboxylate. This is a step in the synthesis of thiazole, in the thiamine biosynthesis pathway. The sulfur is donated as persulfide by IscS. In Shewanella sp. (strain ANA-3), this protein is tRNA sulfurtransferase.